The sequence spans 660 residues: DNA mismatch repair protein MutL (660 aa).

Belongs to the DNA mismatch repair MutL/HexB family.

In terms of biological role, this protein is involved in the repair of mismatches in DNA. It is required for dam-dependent methyl-directed DNA mismatch repair. May act as a 'molecular matchmaker', a protein that promotes the formation of a stable complex between two or more DNA-binding proteins in an ATP-dependent manner without itself being part of a final effector complex. The protein is DNA mismatch repair protein MutL of Streptococcus pyogenes serotype M1.